The following is a 371-amino-acid chain: Putative glutamate--cysteine ligase 2 (371 aa).

This sequence belongs to the glutamate--cysteine ligase type 2 family. YbdK subfamily.

The catalysed reaction is L-cysteine + L-glutamate + ATP = gamma-L-glutamyl-L-cysteine + ADP + phosphate + H(+). Functionally, ATP-dependent carboxylate-amine ligase which exhibits weak glutamate--cysteine ligase activity. The polypeptide is Putative glutamate--cysteine ligase 2 (Paraburkholderia phytofirmans (strain DSM 17436 / LMG 22146 / PsJN) (Burkholderia phytofirmans)).